The primary structure comprises 389 residues: MKFVDEAVIRVEAGDGGSGCVSFRREKYVPDGGPDGGDGGDGGSVFLQADENFNTLIEFRFERFHMAERGENGRGRDCTGHSGKDLILKVPVGTRAVDHDTEEVLGDLTTHGQKLLVAKGGFHGLGNTRFKSSTNRAPRQKTLGTPGEVRSLKLELLLLADVGLLGMPNAGKSTFIRAVSRATPKVADYPFTTLVPNLGVVNPRPGQSFVIADIPGLIEGAADGAGLGIRFLKHLERCRILLHIIDIEPIDGTDPVESARAIVGELEKYSPKLASKPRWLVFNKTDLLLEEELQQKVDRIVKEMGWEGDVYTISAYNRDGTNELALKLLDYIASLPPEDNEIDPDSEVEFKWDNYHQANLDSVNEDYVDEDDDDDFDDDDYDVEVIYQR.

Residues 1–159 enclose the Obg domain; it reads MKFVDEAVIR…RSLKLELLLL (159 aa). Residues 160-333 enclose the OBG-type G domain; that stretch reads ADVGLLGMPN…LALKLLDYIA (174 aa). GTP is bound by residues 166-173, 191-195, 213-216, 283-286, and 314-316; these read GMPNAGKS, FTTLV, DIPG, NKTD, and SAY. Mg(2+) is bound by residues serine 173 and threonine 193.

The protein belongs to the TRAFAC class OBG-HflX-like GTPase superfamily. OBG GTPase family. In terms of assembly, monomer. Mg(2+) is required as a cofactor.

It is found in the cytoplasm. Functionally, an essential GTPase which binds GTP, GDP and possibly (p)ppGpp with moderate affinity, with high nucleotide exchange rates and a fairly low GTP hydrolysis rate. Plays a role in control of the cell cycle, stress response, ribosome biogenesis and in those bacteria that undergo differentiation, in morphogenesis control. This Shewanella baltica (strain OS223) protein is GTPase Obg.